A 219-amino-acid chain; its full sequence is Transmembrane emp24 domain-containing protein 10 (219 aa).

The first 31 residues, 1–31 (MSGLSGPPARRGPFPLALLLLFLLGPRLVLA), serve as a signal peptide directing secretion. A required for interaction with STX17 region spans residues 1–142 (MSGLSGPPAR…KNYEEIAKVE (142 aa)). Residues 32–185 (ISFHLPINSR…RDTNESTNTR (154 aa)) lie on the Lumenal side of the membrane. The GOLD domain maps to 41–193 (RKCLREEIHK…TRVLYFSIFS (153 aa)). A required for TMED10 and TMED2 cis-Golgi network localization region spans residues 147–178 (LEVELRRLEDLSESIVNDFAYMKKREEEMRDT). 2 positions are modified to dimethylated arginine: R171 and R176. N179 carries an N-linked (GlcNAc...) asparagine glycan. The helical transmembrane segment at 186 to 206 (VLYFSIFSMFCLIGLATWQVF) threads the bilayer. An interaction with COPG1 region spans residues 204–219 (QVFYLRRFFKAKKLIE). Residues 207–219 (YLRRFFKAKKLIE) are Cytoplasmic-facing. The interaction with ARF1 and IL1B stretch occupies residues 207–219 (YLRRFFKAKKLIE). The COPII vesicle coat-binding signature appears at 211-212 (FF). A COPI vesicle coat-binding motif is present at residues 211–219 (FFKAKKLIE).

Belongs to the EMP24/GP25L family. Predominantly dimeric and to a lesser extent monomeric in the ER. Monomer and dimer in ERGIC and cis-Golgi network. Forms homooligomer (via GOLD domain); the assembly is promoted by direct binding with leaderless cargos and may form a protein channel that facilitates cargo entry into the ERGIC. Forms heterooligomeric complexes with other members of the p24 family such as TMED2, TMED7 and TMED9. Interacts (via GOLD domain) with TMED2 (via GOLD domain); the complex is required for export of TMED10 from the ER to the cis-Golgi network; the complex is proposed to be involved in cis-Golgi network dynamics and / or biogenesis. Associates with the COPI vesicle coat subunits (coatomer). Tetramerization of the cytoplasmic domain at the Golgi membrane in vitro; the complex is proposed to interact with COPI coatomer and induce budding of the vesicles. Interacts with COPG1; the interaction involves TMED10 homodimer. Interacts with ARF1 (GDP-bound); the interaction probably involves a TMED10 oligomer. Interacts with SEC23A, SEC24B, SEC24C and SEC24D components of the coat protein complex II/COPII, indicative of an association of TMED10 with the COPII vesicle coat. Interacts with CD59. Interacts with MPPE1/PGAP5; the complex might recruit and sort GPI-anchored proteins to the ER-exit site, or the interaction might lead to recycling of PGAP5 between the ER and the Golgi. Interacts with F2LR1/PAR2. Interacts with KDELR2/ERD2; the interaction is disrupted by KDELR2 ligand. Found in a complex composed at least of SURF4, TMED2 and TMED10. Associates with the presenilin-dependent gamma-secretase complex. Interacts with STX17; the interaction is direct. Interacts with IL-1; the interaction is direct. Interacts with RAB21 (active GTP-bound form); the interaction is indirect and regulates TMED10 abundance and localization at the Golgi.

The protein resides in the endoplasmic reticulum membrane. It is found in the endoplasmic reticulum-Golgi intermediate compartment membrane. The protein localises to the golgi apparatus membrane. It localises to the golgi apparatus. Its subcellular location is the cis-Golgi network membrane. The protein resides in the trans-Golgi network membrane. It is found in the cytoplasmic vesicle. The protein localises to the secretory vesicle membrane. It localises to the cell membrane. Its subcellular location is the melanosome. Its function is as follows. Cargo receptor involved in protein vesicular trafficking and quality control in the endoplasmic reticulum (ER) and Golgi. The p24 protein family is a group of transmembrane proteins that bind coat protein complex I/COPI and coat protein complex II/COPII involved in vesicular trafficking between the membranes. Acts at the lumenal side for incorporation of secretory cargo molecules into transport vesicles and involved in vesicle coat formation at the cytoplasmic side. Mainly functions in the early secretory pathway and cycles between the ER, ER-Golgi intermediate compartment (ERGIC) and Golgi, mediating cargo transport through COPI and COPII-coated vesicles. In COPII vesicle-mediated anterograde transport, involved in the transport of GPI-anchored proteins by acting together with TMED2 as their cargo receptor; the function specifically implies SEC24C and SEC24D of the COPII vesicle coat and lipid raft-like microdomains of the ER. Recognizes GPI anchors structural remodeled in the ER by the GPI inositol-deacylase/PGAP1 and the metallophosphoesterase MPPE1/PGAP5. In COPI vesicle-mediated retrograde transport, involved in the biogenesis of COPI vesicles and vesicle coat recruitment. Involved in trafficking of amyloid beta A4 protein and soluble APP-beta release (independent from the modulation of gamma-secretase activity). Involved in the KDELR2-mediated retrograde transport of the toxin A subunit (CTX-A-K63)together with COPI and the COOH terminus of KDELR2. On Golgi membranes, acts as a primary receptor for ARF1-GDP, a GTP-binding protein involved in COPI-vesicle formation. Increases coatomer-dependent GTPase-activating activity of ARFGAP2 which mediates the hydrolysis of ARF1-bound GTP and therefore modulates protein trafficking from the Golgi apparatus. Involved in the exocytic trafficking of G protein-coupled receptors F2LR1/PAR2 (trypsin and tryspin-like enzyme receptor), OPRM1 (opioid receptor) and P2RY4 (UTD and UDP receptor) from the Golgi to the plasma membrane, thus contributing to receptor resensitization. In addition to its cargo receptor activity, may also act as a protein channel after oligomerization, facilitating the post-translational entry of leaderless cytoplasmic cargo into the ERGIC. Involved in the translocation into ERGIC, the vesicle entry and the secretion of leaderless cargos (lacking the secretion signal sequence), including the mature form of interleukin 1/IL-1 family members, the alpha-crystallin B chain HSPB5, the carbohydrate-binding proteins galectin-1/LGALS1 and galectin-3/LGALS3, the microtubule-associated protein Tau/MAPT, and the annexin A1/ANXA1; the translocation process is dependent on cargo protein unfolding and enhanced by chaperones HSP90AB1 and HSP90B1/GRP9. Could also associates with the presenilin-dependent gamma-secretase complex in order to regulate gamma-cleavages of the amyloid beta A4 protein to yield amyloid-beta 40/Abeta40. In Homo sapiens (Human), this protein is Transmembrane emp24 domain-containing protein 10.